Here is a 1036-residue protein sequence, read N- to C-terminus: Cysteine-rich motor neuron 1 protein (1036 aa).

Residues 1 to 34 (MYLVAGDRGLAGCGHLLVSLLGLLLLLARSGTRA) form the signal peptide. Residues 35-112 (LVCLPCDESK…EYEAGVCEDE (78 aa)) enclose the IGFBP N-terminal domain. The Extracellular portion of the chain corresponds to 35 to 939 (LVCLPCDESK…HPSEDSSLDS (905 aa)). 4 cysteine pairs are disulfide-bonded: Cys-37/Cys-60, Cys-40/Cys-62, Cys-45/Cys-63, and Cys-51/Cys-66. N-linked (GlcNAc...) asparagine glycosylation occurs at Asn-71. 2 disulfide bridges follow: Cys-74/Cys-90 and Cys-84/Cys-109. Asn-113 is a glycosylation site (N-linked (GlcNAc...) asparagine). A Cell attachment site motif is present at residues 314–316 (RGD). N-linked (GlcNAc...) asparagine glycosylation is present at Asn-330. 2 consecutive VWFC domains span residues 334 to 391 (PACV…PVCE) and 401 to 457 (AGCY…PVCE). Antistasin-like domains follow at residues 469 to 498 (CGELSNCTLTGKDCINGFKRDHNGCRTCQC), 505 to 532 (CSERKQGCTLNCPFGFLTDAQNCEICEC), 539 to 564 (CRPIICDKYCPLGLLKNKHGCDICRC), and 567 to 592 (CPELSCSKICPLGFQQDSHGCLICKC). A glycan (N-linked (GlcNAc...) asparagine) is linked at Asn-474. VWFC domains follow at residues 606 to 663 (GTCL…PSCA) and 677 to 735 (SICH…PQCT). A glycan (N-linked (GlcNAc...) asparagine) is linked at Asn-746. 2 VWFC domains span residues 751-809 (NYCK…PYCI) and 817-874 (VVCH…PMCP). Residues 940–960 (IASVVVPIIICLSIIIAFLFI) form a helical membrane-spanning segment. At 961 to 1036 (NQKKQWIPLL…LQADNFYQTV (76 aa)) the chain is on the cytoplasmic side. The residue at position 1035 (Thr-1035) is a Phosphothreonine.

In terms of assembly, interacts with BMP4 and BMP7. In terms of processing, N-glycosylated. Expressed in pancreas, kidney, skeletal muscle, lung, placenta, brain, heart, spleen, liver and small intestine. Expressed in blood vessels (at protein level).

The protein localises to the secreted. It localises to the cell membrane. May play a role in CNS development by interacting with growth factors implicated in motor neuron differentiation and survival. May play a role in capillary formation and maintenance during angiogenesis. Modulates BMP activity by affecting its processing and delivery to the cell surface. The polypeptide is Cysteine-rich motor neuron 1 protein (CRIM1) (Homo sapiens (Human)).